The sequence spans 321 residues: Probable protein phosphatase 2C 44 (321 aa).

2 disordered regions span residues 1 to 36 (MVGR…GGKK) and 51 to 70 (NSSS…NKVT). The span at 9–31 (SASSSASCSPSSSAAGTSSSSSA) shows a compositional bias: low complexity. Positions 51 to 69 (NSSSTDTGKGRSKQSSNKV) are enriched in polar residues. The PPM-type phosphatase domain occupies 70-319 (THGFHLVEGK…DDISCIVIRF (250 aa)). The Mn(2+) site is built by D107, G108, D271, and D310.

This sequence belongs to the PP2C family. Mg(2+) serves as cofactor. Requires Mn(2+) as cofactor.

The enzyme catalyses O-phospho-L-seryl-[protein] + H2O = L-seryl-[protein] + phosphate. It carries out the reaction O-phospho-L-threonyl-[protein] + H2O = L-threonyl-[protein] + phosphate. This Oryza sativa subsp. japonica (Rice) protein is Probable protein phosphatase 2C 44.